We begin with the raw amino-acid sequence, 186 residues long: UPF0301 protein PM1869 (186 aa).

Belongs to the UPF0301 (AlgH) family.

In Pasteurella multocida (strain Pm70), this protein is UPF0301 protein PM1869.